We begin with the raw amino-acid sequence, 54 residues long: Ovomucoid (54 aa).

One can recognise a Kazal-like domain in the interval 4–54 (VDCSDYPKPVCSLEYMPLCGSDNKTYGNKCNFCNAVADSNGTLTLSHFGKC). Disulfide bonds link Cys6–Cys36, Cys14–Cys33, and Cys22–Cys54. Asn43 is a glycosylation site (N-linked (GlcNAc...) asparagine).

It is found in the secreted. The chain is Ovomucoid from Guira guira (Guira cuckoo).